The sequence spans 231 residues: Peroxisomal membrane protein 11E (231 aa).

Residues 1–91 lie on the Cytoplasmic side of the membrane; it reads MTTLDLTRAE…LPLVLLGKSK (91 aa). The helical transmembrane segment at 92–108 threads the bilayer; that stretch reads NALLSTFLFLDQIVWLG. Residues 109–202 lie on the Lumenal side of the membrane; the sequence is RSGIYKNKER…LLQLAPKTIS (94 aa). The chain crosses the membrane as a helical span at residues 203–222; that stretch reads PRVTGAFGFTTSLISCYQLL. Residues 223–231 are Cytoplasmic-facing; it reads PSRPKLKTP.

The protein belongs to the peroxin-11 family. As to quaternary structure, homooligomer. Interacts with ARC5 and FIS1B on peroxisomes. As to expression, expressed in leaves and developing siliques.

It is found in the peroxisome membrane. Involved in peroxisomal proliferation. Promotes peroxisomal duplication, aggregation or elongation without fission. This chain is Peroxisomal membrane protein 11E (PEX11E), found in Arabidopsis thaliana (Mouse-ear cress).